The following is a 302-amino-acid chain: Acetylglutamate kinase (302 aa).

Substrate contacts are provided by residues 67 to 68 (GG), Arg89, and Asn194.

Belongs to the acetylglutamate kinase family. ArgB subfamily.

Its subcellular location is the cytoplasm. It catalyses the reaction N-acetyl-L-glutamate + ATP = N-acetyl-L-glutamyl 5-phosphate + ADP. The protein operates within amino-acid biosynthesis; L-arginine biosynthesis; N(2)-acetyl-L-ornithine from L-glutamate: step 2/4. In terms of biological role, catalyzes the ATP-dependent phosphorylation of N-acetyl-L-glutamate. This is Acetylglutamate kinase from Hahella chejuensis (strain KCTC 2396).